A 356-amino-acid chain; its full sequence is Histidinol-phosphate aminotransferase 1 (356 aa).

N6-(pyridoxal phosphate)lysine is present on Lys217.

The protein belongs to the class-II pyridoxal-phosphate-dependent aminotransferase family. Histidinol-phosphate aminotransferase subfamily. As to quaternary structure, homodimer. It depends on pyridoxal 5'-phosphate as a cofactor.

The enzyme catalyses L-histidinol phosphate + 2-oxoglutarate = 3-(imidazol-4-yl)-2-oxopropyl phosphate + L-glutamate. It functions in the pathway amino-acid biosynthesis; L-histidine biosynthesis; L-histidine from 5-phospho-alpha-D-ribose 1-diphosphate: step 7/9. In Burkholderia mallei (strain ATCC 23344), this protein is Histidinol-phosphate aminotransferase 1.